The sequence spans 277 residues: SF-assemblin (277 aa).

Positions 1–20 (MATSGMVSPTSGRPFSPMRS) are disordered. Residues 1-27 (MATSGMVSPTSGRPFSPMRSSVLTTTG) form a nonhelical region region. The tract at residues 28-277 (SAIKLEHVSE…KMVNMQHNSA (250 aa)) is rod. A coiled-coil region spans residues 70-90 (RLEKSMEAEVKRRAESDKQLQ).

It belongs to the SF-assemblin family. In terms of processing, the N-terminus is blocked.

The protein localises to the cytoplasm. Its subcellular location is the cytoskeleton. In terms of biological role, major component of the striated microtubule-associated fibers (SMAFs; system-I-fibers). The chain is SF-assemblin from Dunaliella bioculata (Green alga).